A 705-amino-acid chain; its full sequence is Lethal(3)malignant brain tumor-like protein 2 (705 aa).

The disordered stretch occupies residues 1-84 (MEKPPSIEET…GTPRSLDGSG (84 aa)). Serine 13 bears the Phosphoserine mark. Residues 15-25 (PMEEEEDDDLE) are compositionally biased toward acidic residues. The segment covering 38–49 (SSVGSESSSYLE) has biased composition (low complexity). A compositionally biased stretch (acidic residues) spans 50–60 (ESSEAENEDRE). Serine 67 bears the Phosphoserine mark. Threonine 76 carries the phosphothreonine modification. An FCS-type zinc finger spans residues 81–116 (DGSGSEPAVCEMCGIVGTREAFFSKTKRFCSVSCSR). Residues cysteine 90, cysteine 93, cysteine 110, and cysteine 114 each coordinate Zn(2+). 4 MBT repeats span residues 179 to 283 (FDWG…LVPP), 291 to 391 (TDWK…IKMS), 397 to 500 (MAHH…LTPP), and 508 to 604 (FNWE…LQPP). At serine 338 the chain carries Phosphoserine. A Glycyl lysine isopeptide (Lys-Gly) (interchain with G-Cter in SUMO2) cross-link involves residue lysine 405. The tract at residues 608–705 (EPATPLKAKE…VENIKQETDD (98 aa)) is disordered. The span at 619–634 (TKKKKKQFGKKRKRIP) shows a compositional bias: basic residues. Glycyl lysine isopeptide (Lys-Gly) (interchain with G-Cter in SUMO2) cross-links involve residues lysine 647, lysine 659, and lysine 675. 3 positions are modified to phosphoserine: serine 683, serine 688, and serine 689. Lysine 700 is covalently cross-linked (Glycyl lysine isopeptide (Lys-Gly) (interchain with G-Cter in SUMO1); alternate). A Glycyl lysine isopeptide (Lys-Gly) (interchain with G-Cter in SUMO2); alternate cross-link involves residue lysine 700.

Part of the E2F6.com-1 complex in G0 phase composed of E2F6, MGA, MAX, TFDP1, CBX3, BAT8, EUHMTASE1, RING1, RNF2, MBLR, BAT8 and YAF2.

It is found in the nucleus. Putative Polycomb group (PcG) protein. PcG proteins maintain the transcriptionally repressive state of genes, probably via a modification of chromatin, rendering it heritably changed in its expressibility. Its association with a chromatin-remodeling complex suggests that it may contribute to prevent expression of genes that trigger the cell into mitosis. Binds to monomethylated and dimethylated 'Lys-20' on histone H4. Binds histone H3 peptides that are monomethylated or dimethylated on 'Lys-4', 'Lys-9' or 'Lys-27'. This chain is Lethal(3)malignant brain tumor-like protein 2 (L3MBTL2), found in Pongo abelii (Sumatran orangutan).